We begin with the raw amino-acid sequence, 370 residues long: 3-isopropylmalate dehydrogenase (370 aa).

77 to 90 (GPKWDSVPYEVRPE) contacts NAD(+). Substrate contacts are provided by Arg-97, Arg-107, Arg-135, and Asp-226. Mg(2+) contacts are provided by Asp-226, Asp-250, and Asp-254. 290 to 302 (GSAPDIAGKGIAN) serves as a coordination point for NAD(+).

This sequence belongs to the isocitrate and isopropylmalate dehydrogenases family. LeuB type 1 subfamily. Homodimer. Mg(2+) is required as a cofactor. Mn(2+) serves as cofactor.

The protein resides in the cytoplasm. It carries out the reaction (2R,3S)-3-isopropylmalate + NAD(+) = 4-methyl-2-oxopentanoate + CO2 + NADH. It functions in the pathway amino-acid biosynthesis; L-leucine biosynthesis; L-leucine from 3-methyl-2-oxobutanoate: step 3/4. Functionally, catalyzes the oxidation of 3-carboxy-2-hydroxy-4-methylpentanoate (3-isopropylmalate) to 3-carboxy-4-methyl-2-oxopentanoate. The product decarboxylates to 4-methyl-2 oxopentanoate. This is 3-isopropylmalate dehydrogenase from Brucella suis biovar 1 (strain 1330).